A 278-amino-acid polypeptide reads, in one-letter code: Thioredoxin-related transmembrane protein 1 (278 aa).

The N-terminal stretch at 1–26 (MAHLGRLMVPLAALVLLLWAVPGAHG) is a signal peptide. Residues 27–132 (RRNNVRVLTD…FINFVSDKEW (106 aa)) enclose the Thioredoxin domain. Residues 27–181 (RRNNVRVLTD…DLGIPAWGSY (155 aa)) are Extracellular-facing. Catalysis depends on nucleophile residues Cys56 and Cys59. An intrachain disulfide couples Cys56 to Cys59. Residues 182–202 (LVFAFATVLSGLLLGLCMIFV) traverse the membrane as a helical segment. The Cytoplasmic portion of the chain corresponds to 203 to 278 (ADCLCPSKRR…VGLPSATDTS (76 aa)). 2 S-palmitoyl cysteine lipidation sites follow: Cys205 and Cys207. Over residues 217 to 226 (QYAKKTSPEF) the composition is skewed to polar residues. The disordered stretch occupies residues 217–278 (QYAKKTSPEF…VGLPSATDTS (62 aa)). Positions 235–251 (EEQEADEEDVSEEEAED) are enriched in acidic residues. Ser245 and Ser278 each carry phosphoserine.

As to quaternary structure, interacts with ATP2A2. In terms of processing, palmitoylated; palmitoylation is required for localization to mitochondria-associated endoplasmic reticulum membrane (MAM).

The protein localises to the endoplasmic reticulum membrane. It is found in the mitochondrion membrane. Its subcellular location is the secreted. It catalyses the reaction Catalyzes the rearrangement of -S-S- bonds in proteins.. In terms of biological role, thiredoxin domain-containing protein that participates in various redox reactions through the reversible oxidation of its active center dithiol to a disulfide and catalyze dithiol-disulfide exchange reactions. Acts as a key inhibitor of the alternative triglyceride biosynthesis pathway by inhibiting the activity of TMEM68/DIESL at the endoplasmic reticulum, thereby restricting accumulation of triacylglycerol. The alternative triglyceride biosynthesis pathway mediates formation of triacylglycerol from diacylglycerol and membrane phospholipids. Acts as a protein disulfide isomerase by catalyzing formation or reduction of disulfide bonds. Specifically mediates formation of disulfide bonds of transmembrane proteins at the endoplasmic reticulum membrane. Involved in ER-associated degradation (ERAD) via its protein disulfide isomerase activity by acting on folding-defective polypeptides at the endoplasmic reticulum membrane. Acts as a negative regulator of platelet aggregation following secretion in the extracellular space. Acts as a regulator of endoplasmic reticulum-mitochondria contact sites via its ability to regulate redox signals. Regulates endoplasmic reticulum-mitochondria Ca(2+) flux. The sequence is that of Thioredoxin-related transmembrane protein 1 from Mus musculus (Mouse).